We begin with the raw amino-acid sequence, 331 residues long: 6-phosphogluconolactonase (331 aa).

This sequence belongs to the cycloisomerase 2 family.

The catalysed reaction is 6-phospho-D-glucono-1,5-lactone + H2O = 6-phospho-D-gluconate + H(+). It participates in carbohydrate degradation; pentose phosphate pathway; D-ribulose 5-phosphate from D-glucose 6-phosphate (oxidative stage): step 2/3. In terms of biological role, catalyzes the hydrolysis of 6-phosphogluconolactone to 6-phosphogluconate. The sequence is that of 6-phosphogluconolactonase from Salmonella paratyphi B (strain ATCC BAA-1250 / SPB7).